The following is a 201-amino-acid chain: Recombination protein RecR (201 aa).

Residues 56–71 (CKICFNVSSDEVCQYC) form a C4-type zinc finger. A Toprim domain is found at 79-174 (SMICVVEESK…TVSRLASGLP (96 aa)).

The protein belongs to the RecR family.

In terms of biological role, may play a role in DNA repair. It seems to be involved in an RecBC-independent recombinational process of DNA repair. It may act with RecF and RecO. The polypeptide is Recombination protein RecR (Cutibacterium acnes (strain DSM 16379 / KPA171202) (Propionibacterium acnes)).